We begin with the raw amino-acid sequence, 252 residues long: Putative endonuclease C1F12.06c (252 aa).

Positions 43 and 114 each coordinate Mg(2+).

Belongs to the endonuclease V family.

The protein localises to the cytoplasm. Its subcellular location is the nucleus. In Schizosaccharomyces pombe (strain 972 / ATCC 24843) (Fission yeast), this protein is Putative endonuclease C1F12.06c.